A 762-amino-acid chain; its full sequence is cGMP-dependent protein kinase 2 (762 aa).

The disordered stretch occupies residues 1 to 25 (MGNGSVKPKHSKHPDGQSGNLSNEA). A lipid anchor (N-myristoyl glycine) is attached at Gly2. Residues Ser110 and Ser117 each carry the phosphoserine modification. Residues 112-138 (LVSLHSRRGAKAGVSAEPTSRTYDLNK) are disordered. The interval 168 to 283 (FLKRLDPQQI…DEEYRNFLRS (116 aa)) is cGMP-binding, high affinity; cAMP-binding, moderate affinity. 3',5'-cyclic GMP is bound by residues 232-235 (GELA), 242-243 (RT), Lys347, 356-359 (GEKA), 366-367 (RS), Asp412, and Arg415. A cGMP-binding, high affinity; cAMP-binding, low affinity region spans residues 286-416 (LLKNLPEDKL…TLNRDDEKRH (131 aa)). Phosphoserine is present on Ser431. The Protein kinase domain occupies 453–711 (LEIIATLGVG…INDIKKHRWL (259 aa)). Residues 459-467 (LGVGGFGRV) and Lys482 each bind ATP. Catalysis depends on Asp576, which acts as the Proton acceptor. Phosphothreonine is present on Thr609. In terms of domain architecture, AGC-kinase C-terminal spans 712–762 (NGFNWEGLKARSLPSPLRRELSGPIDHSYFDKYPPEKGVPPDEMSGWDKDF). The disordered stretch occupies residues 740 to 762 (YFDKYPPEKGVPPDEMSGWDKDF).

Belongs to the protein kinase superfamily. AGC Ser/Thr protein kinase family. cGMP subfamily. As to quaternary structure, interacts with GRIA1/GLUR1. Post-translationally, myristoylation mediates membrane localization. As to expression, highly expressed in intestinal mucosa and is 20 times less abundant in brain and kidney. Expressed in jejunum, in the apical domain of the villus epithelium.

It is found in the apical cell membrane. The protein localises to the cell membrane. It catalyses the reaction L-seryl-[protein] + ATP = O-phospho-L-seryl-[protein] + ADP + H(+). It carries out the reaction L-threonyl-[protein] + ATP = O-phospho-L-threonyl-[protein] + ADP + H(+). Its activity is regulated as follows. Binding of cGMP results in enzyme activation. Crucial regulator of intestinal secretion and bone growth. Phosphorylates and activates CFTR on the plasma membrane. Plays a key role in intestinal secretion by regulating cGMP-dependent translocation of CFTR in jejunum. Acts downstream of NMDAR to activate the plasma membrane accumulation of GRIA1/GLUR1 in synapse and increase synaptic plasticity. Phosphorylates GRIA1/GLUR1 at Ser-863. Acts as regulator of gene expression and activator of the extracellular signal-regulated kinases MAPK3/ERK1 and MAPK1/ERK2 in mechanically stimulated osteoblasts. Under fluid shear stress, mediates ERK activation and subsequent induction of FOS, FOSL1/FRA1, FOSL2/FRA2 and FOSB that play a key role in the osteoblast anabolic response to mechanical stimulation. This is cGMP-dependent protein kinase 2 (Prkg2) from Rattus norvegicus (Rat).